The primary structure comprises 557 residues: Glucose-6-phosphate isomerase (557 aa).

The active-site Proton donor is the glutamate 359. Catalysis depends on residues histidine 390 and lysine 518.

Belongs to the GPI family.

It is found in the cytoplasm. The enzyme catalyses alpha-D-glucose 6-phosphate = beta-D-fructose 6-phosphate. It participates in carbohydrate biosynthesis; gluconeogenesis. Its pathway is carbohydrate degradation; glycolysis; D-glyceraldehyde 3-phosphate and glycerone phosphate from D-glucose: step 2/4. In terms of biological role, catalyzes the reversible isomerization of glucose-6-phosphate to fructose-6-phosphate. The sequence is that of Glucose-6-phosphate isomerase from Hahella chejuensis (strain KCTC 2396).